A 354-amino-acid chain; its full sequence is tRNA N6-adenosine threonylcarbamoyltransferase (354 aa).

Fe cation is bound by residues His-115 and His-119. Residues 138-142, Asp-171, Gly-184, and Asn-285 each bind substrate; that span reads LVSGG. A Fe cation-binding site is contributed by Asp-313.

It belongs to the KAE1 / TsaD family. Fe(2+) is required as a cofactor.

Its subcellular location is the cytoplasm. The catalysed reaction is L-threonylcarbamoyladenylate + adenosine(37) in tRNA = N(6)-L-threonylcarbamoyladenosine(37) in tRNA + AMP + H(+). Required for the formation of a threonylcarbamoyl group on adenosine at position 37 (t(6)A37) in tRNAs that read codons beginning with adenine. Is involved in the transfer of the threonylcarbamoyl moiety of threonylcarbamoyl-AMP (TC-AMP) to the N6 group of A37, together with TsaE and TsaB. TsaD likely plays a direct catalytic role in this reaction. The protein is tRNA N6-adenosine threonylcarbamoyltransferase of Albidiferax ferrireducens (strain ATCC BAA-621 / DSM 15236 / T118) (Rhodoferax ferrireducens).